We begin with the raw amino-acid sequence, 533 residues long: NADH-quinone oxidoreductase subunit N (533 aa).

14 helical membrane passes run 13 to 33 (VWPL…EGFV), 40 to 60 (LVQA…TILV), 87 to 107 (PALF…LLFA), 141 to 161 (HTEV…FAAA), 164 to 184 (LLTL…LSGL), 200 to 220 (FMLG…VYGF), 243 to 263 (LLIG…AVPF), 275 to 295 (PTAV…GAML), 310 to 330 (QPML…IAIV), 337 to 357 (MLAY…LGVQ), 373 to 393 (VLFY…VVTL), 417 to 437 (VAGV…TAGF), 451 to 471 (GAWP…FFYV), and 502 to 522 (ATIF…GPVL).

It belongs to the complex I subunit 2 family. In terms of assembly, NDH-1 is composed of 14 different subunits. Subunits NuoA, H, J, K, L, M, N constitute the membrane sector of the complex.

It is found in the cell membrane. It catalyses the reaction a quinone + NADH + 5 H(+)(in) = a quinol + NAD(+) + 4 H(+)(out). In terms of biological role, NDH-1 shuttles electrons from NADH, via FMN and iron-sulfur (Fe-S) centers, to quinones in the respiratory chain. The immediate electron acceptor for the enzyme in this species is believed to be a menaquinone. Couples the redox reaction to proton translocation (for every two electrons transferred, four hydrogen ions are translocated across the cytoplasmic membrane), and thus conserves the redox energy in a proton gradient. This is NADH-quinone oxidoreductase subunit N from Nocardioides sp. (strain ATCC BAA-499 / JS614).